The following is a 367-amino-acid chain: 3-dehydroquinate synthase (367 aa).

Residues 69–74 (DGEAFK), 103–107 (GVIGD), 127–128 (TT), lysine 140, and lysine 149 contribute to the NAD(+) site. 3 residues coordinate Zn(2+): glutamate 182, histidine 245, and histidine 262.

The protein belongs to the sugar phosphate cyclases superfamily. Dehydroquinate synthase family. It depends on NAD(+) as a cofactor. Co(2+) serves as cofactor. Zn(2+) is required as a cofactor.

It localises to the cytoplasm. The catalysed reaction is 7-phospho-2-dehydro-3-deoxy-D-arabino-heptonate = 3-dehydroquinate + phosphate. Its pathway is metabolic intermediate biosynthesis; chorismate biosynthesis; chorismate from D-erythrose 4-phosphate and phosphoenolpyruvate: step 2/7. Catalyzes the conversion of 3-deoxy-D-arabino-heptulosonate 7-phosphate (DAHP) to dehydroquinate (DHQ). This is 3-dehydroquinate synthase from Pseudomonas syringae pv. tomato (strain ATCC BAA-871 / DC3000).